The primary structure comprises 814 residues: DNA topoisomerase 1 (814 aa).

Residues 1–12 show a composition bias toward low complexity; it reads MSSSDSDSVSLS. The interval 1–180 is disordered; it reads MSSSDSDSVS…PNDEEDEDED (180 aa). Residues 13 to 22 show a composition bias toward basic residues; sequence IRRRQRRGSS. A phosphoserine mark is found at Ser-52, Ser-54, and Ser-136. Thr-138 carries the phosphothreonine modification. 3 interaction with DNA regions span residues 404–405, 467–472, and 559–561; these read KY, RAGNEK, and SAK. A Topo IB-type catalytic domain is found at 411-814; it reads GSSLKGQSDL…AADTPPDWKW (404 aa). The active-site O-(3'-phospho-DNA)-tyrosine intermediate is the Tyr-773.

The protein belongs to the type IB topoisomerase family. As to quaternary structure, monomer.

It carries out the reaction ATP-independent breakage of single-stranded DNA, followed by passage and rejoining.. In terms of biological role, releases the supercoiling and torsional tension of DNA introduced during the DNA replication and transcription by transiently cleaving and rejoining one strand of the DNA duplex. Introduces a single-strand break via transesterification at a target site in duplex DNA. The scissile phosphodiester is attacked by the catalytic tyrosine of the enzyme, resulting in the formation of a DNA-(3'-phosphotyrosyl)-enzyme intermediate and the expulsion of a 5'-OH DNA strand. TThe free DNA strand then rotates around the intact phosphodiester bond on the opposing strand, thus removing DNA supercoils. Finally, in the religation step, the DNA 5'-OH attacks the covalent intermediate to expel the active-site tyrosine and restore the DNA phosphodiester backbone. The chain is DNA topoisomerase 1 (top1) from Schizosaccharomyces pombe (strain 972 / ATCC 24843) (Fission yeast).